Reading from the N-terminus, the 241-residue chain is Adenylate kinase 3 (241 aa).

38–43 is a binding site for ATP; sequence GCGKGT. Positions 58–87 are NMP; that stretch reads ATGDMLRAAVAAKTPLGIKAKEAMDKGELV. AMP contacts are provided by residues Thr59, Arg64, 85-87, 113-116, and Gln120; these read ELV and GFPR. Positions 154–191 are LID; sequence GRWIHPSSGRSYHTKFAPPKTPGLDDVTGEPLIQRKDD. Arg155 contributes to the ATP binding site. Arg188 and Arg199 together coordinate AMP.

The protein belongs to the adenylate kinase family.

It localises to the cytoplasm. The enzyme catalyses AMP + ATP = 2 ADP. Its function is as follows. Catalyzes the reversible transfer of the terminal phosphate group between ATP and AMP. Plays an important role in cellular energy homeostasis and in adenine nucleotide metabolism. This chain is Adenylate kinase 3 (ADK-A), found in Oryza sativa subsp. japonica (Rice).